Reading from the N-terminus, the 199-residue chain is LexA repressor (199 aa).

Positions 28 to 47 (IRDIAKHFKLTPRGAHIHVI) form a DNA-binding region, H-T-H motif. Catalysis depends on for autocatalytic cleavage activity residues S120 and K157.

This sequence belongs to the peptidase S24 family. As to quaternary structure, homodimer.

It carries out the reaction Hydrolysis of Ala-|-Gly bond in repressor LexA.. In terms of biological role, represses a number of genes involved in the response to DNA damage (SOS response), including recA and lexA. In the presence of single-stranded DNA, RecA interacts with LexA causing an autocatalytic cleavage which disrupts the DNA-binding part of LexA, leading to derepression of the SOS regulon and eventually DNA repair. The protein is LexA repressor of Thermosipho melanesiensis (strain DSM 12029 / CIP 104789 / BI429).